Reading from the N-terminus, the 905-residue chain is DNA gyrase subunit A (905 aa).

One can recognise a Topo IIA-type catalytic domain in the interval 35-524 (IPDVRDGLKP…GEFDQDIEDL (490 aa)). The O-(5'-phospho-DNA)-tyrosine intermediate role is filled by Y123. Positions 551-557 (QKRGGKG) match the GyrA-box motif. Residues 882–905 (IAESSDDNEEDSEFEEEVAEEGSE) are disordered. Positions 885–905 (SSDDNEEDSEFEEEVAEEGSE) are enriched in acidic residues.

Belongs to the type II topoisomerase GyrA/ParC subunit family. Heterotetramer, composed of two GyrA and two GyrB chains. In the heterotetramer, GyrA contains the active site tyrosine that forms a transient covalent intermediate with DNA, while GyrB binds cofactors and catalyzes ATP hydrolysis.

The protein resides in the cytoplasm. It catalyses the reaction ATP-dependent breakage, passage and rejoining of double-stranded DNA.. Its function is as follows. A type II topoisomerase that negatively supercoils closed circular double-stranded (ds) DNA in an ATP-dependent manner to modulate DNA topology and maintain chromosomes in an underwound state. Negative supercoiling favors strand separation, and DNA replication, transcription, recombination and repair, all of which involve strand separation. Also able to catalyze the interconversion of other topological isomers of dsDNA rings, including catenanes and knotted rings. Type II topoisomerases break and join 2 DNA strands simultaneously in an ATP-dependent manner. The polypeptide is DNA gyrase subunit A (Rickettsia bellii (strain RML369-C)).